Reading from the N-terminus, the 903-residue chain is Chitin synthase 1 (903 aa).

The disordered stretch occupies residues 1–154; sequence MDPRYGAQPQ…YQDQPQQGGG (154 aa). Positions 67 to 79 are enriched in polar residues; the sequence is DHLNLNAAQSVDN. A glycan (N-linked (GlcNAc...) asparagine) is linked at asparagine 79. A compositionally biased stretch (low complexity) spans 100-117; the sequence is YYNQPYEPRPQQQPYDQG. The segment covering 135–150 has biased composition (polar residues); it reads HQPSDAPSEPYQDQPQ. Helical transmembrane passes span 444–464, 543–563, 573–593, 619–639, 654–674, 700–720, 729–749, 828–848, and 875–895; these read SAFG…YVAL, RWLN…LDFL, FAFF…WFAI, ILGV…FVLS, MCWF…FIAV, MLII…LIML, LVQY…YAFC, GVVL…LSSA, and IVLW…MWFL.

Belongs to the chitin synthase family. Class I subfamily.

It localises to the cell membrane. The catalysed reaction is [(1-&gt;4)-N-acetyl-beta-D-glucosaminyl](n) + UDP-N-acetyl-alpha-D-glucosamine = [(1-&gt;4)-N-acetyl-beta-D-glucosaminyl](n+1) + UDP + H(+). Polymerizes chitin, a structural polymer of the cell wall and septum, by transferring the sugar moiety of UDP-GlcNAc to the non-reducing end of the growing chitin polymer. Plays an important role in nuclear sorting or distribution. This chain is Chitin synthase 1, found in Fusarium oxysporum f. sp. lycopersici (strain 4287 / CBS 123668 / FGSC 9935 / NRRL 34936) (Fusarium vascular wilt of tomato).